A 427-amino-acid polypeptide reads, in one-letter code: Tryptophan synthase beta chain 1 (427 aa).

Lys-107 bears the N6-(pyridoxal phosphate)lysine mark.

Belongs to the TrpB family. As to quaternary structure, tetramer of two alpha and two beta chains. Pyridoxal 5'-phosphate is required as a cofactor.

The catalysed reaction is (1S,2R)-1-C-(indol-3-yl)glycerol 3-phosphate + L-serine = D-glyceraldehyde 3-phosphate + L-tryptophan + H2O. It participates in amino-acid biosynthesis; L-tryptophan biosynthesis; L-tryptophan from chorismate: step 5/5. In terms of biological role, the beta subunit is responsible for the synthesis of L-tryptophan from indole and L-serine. The chain is Tryptophan synthase beta chain 1 (trpB1) from Aeropyrum pernix (strain ATCC 700893 / DSM 11879 / JCM 9820 / NBRC 100138 / K1).